We begin with the raw amino-acid sequence, 803 residues long: MIPVTEFRQFSEQQPAFRVLKPWWDVFTDYLSVAMLMIGVFGCTLQVMQDKIICLPKRVQPAQNHSSLSNVSQAVASTTPLPPPKPSPANPITVEMKGLKTDLDLQQYSFINQMCYERALHWYAKYFPYLVLIHTLVFMLCSNFWFKFPGSSSKIEHFISILGKCFDSPWTTRALSEVSGEDSEEKDNRKNNMNRSNTIQSGPEDSLVNSQSLKSIPEKFVVDKSTAGALDKKEGEQAKALFEKVKKFRLHVEEGDILYAMYVRQTVLKVIKFLIIIAYNSALVSKVQFTVDCNVDIQDMTGYKNFSCNHTMAHLFSKLSFCYLCFVSIYGLTCLYTLYWLFYRSLREYSFEYVRQETGIDDIPDVKNDFAFMLHMIDQYDPLYSKRFAVFLSEVSENKLKQLNLNNEWTPDKLRQKLQTNAHNRLELPLIMLSGLPDTVFEITELQSLKLEIIKNVMIPATIAQLDNLQELSLHQCSVKIHSAALSFLKENLKVLSVKFDDMRELPPWMYGLRNLEELYLVGSLSHDISRNVTLESLRDLKSLKILSIKSNVSKIPQAVVDVSSHLQKMCIHNDGTKLVMLNNLKKMTNLTELELVHCDLERIPHAVFSLLSLQELDLKENNLKSIEEIVSFQHLRKLTVLKLWHNSITYIPEHIKKLTSLERLSFSHNKIEVLPSHLFLCNKIRYLDLSYNDIRFIPPEIGVLQSLQYFSITCNKVESLPDELYFCKKLKTLKIGKNSLSVLSPKIGNLLFLSYLDVKGNHFEILPPELGDCRALKRAGLVVEDALFETLPSDVREQMKTE.

The Cytoplasmic segment spans residues 1-22 (MIPVTEFRQFSEQQPAFRVLKP). The chain crosses the membrane as a helical span at residues 23-47 (WWDVFTDYLSVAMLMIGVFGCTLQV). At 48–124 (MQDKIICLPK…CYERALHWYA (77 aa)) the chain is on the extracellular side. Intrachain disulfides connect cysteine 54–cysteine 308 and cysteine 115–cysteine 293. 2 N-linked (GlcNAc...) asparagine glycosylation sites follow: asparagine 64 and asparagine 70. A helical membrane pass occupies residues 125–144 (KYFPYLVLIHTLVFMLCSNF). At 145–262 (WFKFPGSSSK…EEGDILYAMY (118 aa)) the chain is on the cytoplasmic side. The disordered stretch occupies residues 177–209 (EVSGEDSEEKDNRKNNMNRSNTIQSGPEDSLVN). The span at 191–209 (NNMNRSNTIQSGPEDSLVN) shows a compositional bias: polar residues. A phosphoserine mark is found at serine 212 and serine 215. The helical transmembrane segment at 263–284 (VRQTVLKVIKFLIIIAYNSALV) threads the bilayer. Over 285–314 (SKVQFTVDCNVDIQDMTGYKNFSCNHTMAH) the chain is Extracellular. The helical transmembrane segment at 315–339 (LFSKLSFCYLCFVSIYGLTCLYTLY) threads the bilayer. Residues 340–803 (WLFYRSLREY…SDVREQMKTE (464 aa)) are Cytoplasmic-facing. 17 LRR repeats span residues 397-420 (ENKL…KLQT), 421-443 (NAHN…VFEI), 446-466 (LQSL…IAQL), 467-488 (DNLQ…ALSF), 490-513 (KENL…MYGL), 515-537 (NLEE…TLES), 541-563 (LKSL…VVDV), 565-587 (SHLQ…NLKK), 588-611 (MTNL…VFSL), 613-635 (SLQE…SFQH), 636-659 (LRKL…IKKL), 660-682 (TSLE…LFLC), 684-705 (KIRY…IGVL), 706-728 (QSLQ…LYFC), 730-751 (KLKT…IGNL), 753-774 (FLSY…LGDC), and 776-799 (ALKR…VREQ).

The protein belongs to the LRRC8 family. As to quaternary structure, heterohexamer; oligomerizes with other LRRC8 proteins (LRRC8A, LRRC8B, LRRC8D and/or LRRC8E) to form a heterohexamer. Homoheptamer; inactive, likely because it is not targeted to the plasma membrane in the absence of LRRC8A. In vivo, the subunit composition may depend primarily on expression levels, and heterooligomeric channels containing various proportions of the different LRRC8 proteins may coexist. Expressed at highest levels in skeletal muscle, and at moderate levels in heart, lung and peripheral blood leukocytes.

It is found in the cell membrane. Its subcellular location is the endoplasmic reticulum membrane. It catalyses the reaction chloride(in) = chloride(out). The catalysed reaction is iodide(out) = iodide(in). The enzyme catalyses taurine(out) = taurine(in). It carries out the reaction 2',3'-cGAMP(out) = 2',3'-cGAMP(in). Non-essential component of the volume-regulated anion channel (VRAC, also named VSOAC channel), an anion channel required to maintain a constant cell volume in response to extracellular or intracellular osmotic changes. The VRAC channel conducts iodide better than chloride and can also conduct organic osmolytes like taurine. Plays a redundant role in the efflux of amino acids, such as aspartate and glutamate, in response to osmotic stress. The VRAC channel also mediates transport of immunoreactive cyclic dinucleotide GMP-AMP (2'-3'-cGAMP), an immune messenger produced in response to DNA virus in the cytosol. Channel activity requires LRRC8A plus at least one other family member (LRRC8B, LRRC8C, LRRC8D or LRRC8E); channel characteristics depend on the precise subunit composition. The sequence is that of Volume-regulated anion channel subunit LRRC8C from Homo sapiens (Human).